Here is a 250-residue protein sequence, read N- to C-terminus: tRNA (guanine-N(1)-)-methyltransferase (250 aa).

S-adenosyl-L-methionine is bound by residues glycine 116 and 136-141 (IGDYVL).

Belongs to the RNA methyltransferase TrmD family. As to quaternary structure, homodimer.

The protein localises to the cytoplasm. The catalysed reaction is guanosine(37) in tRNA + S-adenosyl-L-methionine = N(1)-methylguanosine(37) in tRNA + S-adenosyl-L-homocysteine + H(+). Functionally, specifically methylates guanosine-37 in various tRNAs. The polypeptide is tRNA (guanine-N(1)-)-methyltransferase (Pseudomonas savastanoi pv. phaseolicola (strain 1448A / Race 6) (Pseudomonas syringae pv. phaseolicola (strain 1448A / Race 6))).